The sequence spans 331 residues: Tetraacyldisaccharide 4'-kinase (331 aa).

55-62 (TAGGNGKT) provides a ligand contact to ATP.

The protein belongs to the LpxK family.

The catalysed reaction is a lipid A disaccharide + ATP = a lipid IVA + ADP + H(+). It participates in glycolipid biosynthesis; lipid IV(A) biosynthesis; lipid IV(A) from (3R)-3-hydroxytetradecanoyl-[acyl-carrier-protein] and UDP-N-acetyl-alpha-D-glucosamine: step 6/6. Its function is as follows. Transfers the gamma-phosphate of ATP to the 4'-position of a tetraacyldisaccharide 1-phosphate intermediate (termed DS-1-P) to form tetraacyldisaccharide 1,4'-bis-phosphate (lipid IVA). This is Tetraacyldisaccharide 4'-kinase from Edwardsiella ictaluri (strain 93-146).